The following is a 2549-amino-acid chain: Serine/threonine-protein kinase mTOR (2549 aa).

At Met1 the chain carries N-acetylmethionine. Residues 1-651 (MLGTGPAAAT…HVVSQTAVQV (651 aa)) are interaction with NBN. HEAT repeat units lie at residues 16 to 53 (SSNV…MELR), 55 to 99 (MSQE…VEGG), 100 to 137 (NATR…AMAG), 138 to 179 (DTFT…AISV), 180 to 220 (PTFF…LILT), 222 to 276 (QREP…RISS), 277 to 313 (MEGE…PRHI), 314 to 364 (TPFT…CCRD), 365 to 409 (LMEE…AFTD), 410 to 445 (TQYL…VAVR), 446 to 494 (SEFK…RAMG), 495 to 529 (PGIQ…RQIP), 530 to 563 (QLKK…GLAH), 564 to 596 (QLAS…EFEG), 597 to 636 (HSLT…SIHL), 637 to 683 (ISGH…DERF), 686 to 724 (HLAQ…MNPA), 727 to 766 (MPFL…NAPR), 769 to 811 (RPYM…VSGL), 814 to 853 (RKWV…STGY), 857 to 893 (PYRK…LLGA), 894 to 942 (LDPY…GNLP), 943 to 988 (LDEF…KCVQ), 989 to 1027 (FLPQ…KSHI), 1029 to 1068 (PYMD…GEFK), 1069 to 1105 (LYLP…LFGA), 1106 to 1144 (NLDD…RLTE), 1145 to 1188 (SLDF…GKKY), 1189 to 1225 (QIFI…LADE), 1226 to 1273 (EEDP…GAAR), 1274 to 1311 (RVSK…QAYN), and 1312 to 1345 (PMAR…ELAL). At Ser567 the chain carries Phosphoserine. Residue Thr1162 is modified to Phosphothreonine. An N6-acetyllysine modification is found at Lys1218. A Phosphoserine modification is found at Ser1261. 16 TPR repeats span residues 1346 to 1382 (TSQD…GIVL), 1383 to 1408 (LGER…QKGP), 1409 to 1442 (TPAI…HFGE), 1443 to 1473 (LEIQ…NKDD), 1474 to 1507 (PELM…VNDE), 1508 to 1541 (TQAK…RDTH), 1542 to 1574 (DGAF…LDAE), 1575 to 1614 (LTAM…RREI), 1615 to 1649 (IRQI…PHED), 1650 to 1693 (MRTW…PTVH), 1694 to 1731 (PQVT…AQHA), 1732 to 1786 (IATE…DRSW), 1787 to 1846 (YKAW…STEG), 1898 to 1930 (NNLQ…VKAI), 1931 to 1970 (QIDT…YHPQ), and 1971 to 2005 (ALIY…SNTL). One can recognise an FAT domain in the interval 1382 to 1982 (LLGERAAKCR…IYPLTVASKS (601 aa)). Residues Lys1662, Lys1702, and Arg1749 each coordinate 1D-myo-inositol hexakisphosphate. Positions 1812–1867 (DEKKKLRHASGANITNATTAATTAATATTTASTEGSNSESEAESTENSPTPSPLQK) are disordered. Over residues 1820 to 1860 (ASGANITNATTAATTAATATTTASTEGSNSESEAESTENSP) the composition is skewed to low complexity. A sufficient for interaction with the FKBP1A/rapamycin complex region spans residues 2012-2144 (VSEELIRVAI…DLELAVPGTY (133 aa)). Residue Lys2066 forms a Glycyl lysine isopeptide (Lys-Gly) (interchain with G-Cter in ubiquitin) linkage. One can recognise a PI3K/PI4K catalytic domain in the interval 2156–2469 (IAPSLQVITS…GVELGEPAHK (314 aa)). At Ser2159 the chain carries Phosphoserine; by TBK1. A G-loop region spans residues 2162–2168 (VITSKQR). Position 2164 is a phosphothreonine (Thr2164). The ATP site is built by Ser2165 and Gln2167. Position 2173 is a phosphothreonine; by PKB/AKT1 (Thr2173). The ATP site is built by Leu2185, Lys2187, Glu2190, Tyr2225, Gly2238, Trp2239, Val2240, and Thr2245. Positions 2258–2296 (KILLNIEHRIMLRMAPDYDHLTLMQKVEVFEHAVNNTAG) are interaction with MLST8. The catalytic loop stretch occupies residues 2335–2343 (GLGDRHPSN). A Mg(2+)-binding site is contributed by Asn2343. Met2345 and Ile2356 together coordinate ATP. The interval 2355-2380 (HIDFGDCFEVAMTREKFPEKIPFRLT) is activation loop. A Mg(2+)-binding site is contributed by Asp2357. A Phosphothreonine; by RPS6KB1 modification is found at Thr2446. A Phosphoserine; by RPS6KB1 modification is found at Ser2448. Ser2478 is subject to Phosphoserine. Phosphoserine; by autocatalysis is present on Ser2481. In terms of domain architecture, FATC spans 2517–2549 (DTLDVPTQVELLIKQATSHENLCQCYIGWCPFW).

It belongs to the PI3/PI4-kinase family. In terms of assembly, part of the mechanistic target of rapamycin complex 1 (mTORC1) which contains MTOR, MLST8 and RPTOR. The mTORC1 complex is a 1 Md obligate dimer of two stoichiometric heterotetramers with overall dimensions of 290 A x 210 A x 135 A. It has a rhomboid shape and a central cavity, the dimeric interfaces are formed by interlocking interactions between the two MTOR and the two RPTOR subunits. The MLST8 subunit forms distal foot-like protuberances, and contacts only one MTOR within the complex, while the small AKT1S1/PRAS40 localizes to the midsection of the central core, in close proximity to RPTOR. mTORC1 associates with AKT1S1/PRAS40, which inhibits its activity by blocking MTOR substrate-recruitment site. Component of the mechanistic target of rapamycin complex 2 (mTORC2), consisting in two heterotretramers composed of MTOR, MLST8, RICTOR and MAPKAP1/SIN1. Interacts with PLPP7 and PML. Interacts with PRR5 and RICTOR; the interaction is direct within the mTORC2 complex and interaction with RICTOR is enhanced by deubiquitination of RICTOR by USP9X. mTORC1 and mTORC2 associate with DEPTOR, which regulates their activity. Interacts with WAC; WAC positively regulates MTOR activity by promoting the assembly of the TTT complex composed of TELO2, TTI1 and TTI2 and the RUVBL complex composed of RUVBL1 and RUVBL2 into the TTT-RUVBL complex which leads to the dimerization of the mTORC1 complex and its subsequent activation. Interacts with UBQLN1. Interacts with TTI1 and TELO2. Interacts with CLIP1; phosphorylates and regulates CLIP1. Interacts with NBN. Interacts with HTR6. Interacts with BRAT1. Interacts with MEAK7 (via C-terminal domain); the interaction increases upon nutrient stimulation. Interacts with TM4SF5; the interaction is positively regulated by arginine and is negatively regulated by leucine. Interacts with GPR137B. Interacts with NCKAP1L. Interacts with TPCN1 and TPCN2; the interaction is required for TPCN1 and TPCN2 sensitivity to ATP. Interacts with ATP6V1A and with CRYAB, forming a ternary complex. Interacts with SLC38A7; this interaction mediates the recruitment of mTORC1 to the lysosome and its subsequent activation. Interacts with TSPAN8. Autophosphorylates when part of mTORC1 or mTORC2. Phosphorylation at Ser-1261, Ser-2159 and Thr-2164 promotes autophosphorylation. Phosphorylated at Ser-2448 by RPS6KB1. Phosphorylation in the kinase domain modulates the interactions of MTOR with RPTOR and AKT1S1/PRAS40 and leads to increased intrinsic mTORC1 kinase activity. Phosphorylation at Ser-2159 by TBK1 in response to growth factors and pathogen recognition receptors promotes mTORC1 activity. Phosphorylation at Ser-2159 by TBK1 in response to EGF growth factor promotes mTORC2 activity, leading to AKT1 phosphorylation and activation. Phosphorylation at Thr-2173 in the ATP-binding region by AKT1 strongly reduces kinase activity. In terms of processing, ubiquitinated at Lys-2066 by the SCF(FBXO22) complex via 'Lys-27'-linked ubiquitination prevents mTORC1 substrate recruitment. Expressed in numerous tissues, with highest levels in testis.

It localises to the lysosome membrane. Its subcellular location is the endoplasmic reticulum membrane. The protein localises to the golgi apparatus membrane. It is found in the cell membrane. The protein resides in the mitochondrion outer membrane. It localises to the cytoplasm. Its subcellular location is the nucleus. The protein localises to the PML body. It is found in the microsome membrane. The protein resides in the cytoplasmic vesicle. It localises to the phagosome. The enzyme catalyses L-seryl-[protein] + ATP = O-phospho-L-seryl-[protein] + ADP + H(+). It carries out the reaction L-threonyl-[protein] + ATP = O-phospho-L-threonyl-[protein] + ADP + H(+). It catalyses the reaction L-tyrosyl-[protein] + ATP = O-phospho-L-tyrosyl-[protein] + ADP + H(+). With respect to regulation, the mTORC1 complex is activated in response to nutrients, growth factors or amino acids: activation requires relocalization of the mTORC1 complex to lysosomes that is mediated by the Ragulator complex, SLC38A9, and the Rag GTPases RagA/RRAGA, RagB/RRAGB, RagC/RRAGC and RagD/RRAGD. Activation of mTORC1 by growth factors such as insulin involves AKT1-mediated phosphorylation of TSC1-TSC2, which leads to the activation of the RHEB GTPase a potent activator of the protein kinase activity of mTORC1. Insulin-stimulated and amino acid-dependent phosphorylation at Ser-1261 promotes autophosphorylation and the activation of mTORC1. On the other hand, low cellular energy levels can inhibit mTORC1 through activation of PRKAA1 while hypoxia inhibits mTORC1 through a REDD1-dependent mechanism which may also require PRKAA1. The kinase activity of MTOR within the mTORC1 complex is positively regulated by MLST8. The kinase activity of MTOR is inhibited by DEPTOR and AKT1S1. The non-canonical mTORC1 complex is independent of the RHEB GTPase and specifically mediates phosphorylation of MiT/TFE factors TFEB and TFE3 but not other mTORC1 substrates: it is activated by FLCN, which activates Rag GTPases RagC/RRAGC and RagD/RRAGD. MTOR is the target of the immunosuppressive and anti-cancer drug rapamycin which acts in complex with FKBP1A/FKBP12, and specifically inhibits its kinase activity. mTORC2 is also activated by growth factors, but seems to be nutrient-insensitive. mTORC2 associates and is directly activated by ribosomes. mTORC2 may also be regulated by RHEB but in an indirect manner through the PI3K signaling pathway. Functionally, serine/threonine protein kinase which is a central regulator of cellular metabolism, growth and survival in response to hormones, growth factors, nutrients, energy and stress signals. MTOR directly or indirectly regulates the phosphorylation of at least 800 proteins. Functions as part of 2 structurally and functionally distinct signaling complexes mTORC1 and mTORC2 (mTOR complex 1 and 2). In response to nutrients, growth factors or amino acids, mTORC1 is recruited to the lysosome membrane and promotes protein, lipid and nucleotide synthesis by phosphorylating key regulators of mRNA translation and ribosome synthesis. This includes phosphorylation of EIF4EBP1 and release of its inhibition toward the elongation initiation factor 4E (eiF4E). Moreover, phosphorylates and activates RPS6KB1 and RPS6KB2 that promote protein synthesis by modulating the activity of their downstream targets including ribosomal protein S6, eukaryotic translation initiation factor EIF4B, and the inhibitor of translation initiation PDCD4. Stimulates the pyrimidine biosynthesis pathway, both by acute regulation through RPS6KB1-mediated phosphorylation of the biosynthetic enzyme CAD, and delayed regulation, through transcriptional enhancement of the pentose phosphate pathway which produces 5-phosphoribosyl-1-pyrophosphate (PRPP), an allosteric activator of CAD at a later step in synthesis, this function is dependent on the mTORC1 complex. Regulates ribosome synthesis by activating RNA polymerase III-dependent transcription through phosphorylation and inhibition of MAF1 an RNA polymerase III-repressor. Activates dormant ribosomes by mediating phosphorylation of SERBP1, leading to SERBP1 inactivation and reactivation of translation. In parallel to protein synthesis, also regulates lipid synthesis through SREBF1/SREBP1 and LPIN1. To maintain energy homeostasis mTORC1 may also regulate mitochondrial biogenesis through regulation of PPARGC1A. In the same time, mTORC1 inhibits catabolic pathways: negatively regulates autophagy through phosphorylation of ULK1. Under nutrient sufficiency, phosphorylates ULK1 at 'Ser-758', disrupting the interaction with AMPK and preventing activation of ULK1. Also prevents autophagy through phosphorylation of the autophagy inhibitor DAP. Also prevents autophagy by phosphorylating RUBCNL/Pacer under nutrient-rich conditions. Prevents autophagy by mediating phosphorylation of AMBRA1, thereby inhibiting AMBRA1 ability to mediate ubiquitination of ULK1 and interaction between AMBRA1 and PPP2CA. mTORC1 exerts a feedback control on upstream growth factor signaling that includes phosphorylation and activation of GRB10 a INSR-dependent signaling suppressor. Among other potential targets mTORC1 may phosphorylate CLIP1 and regulate microtubules. The mTORC1 complex is inhibited in response to starvation and amino acid depletion. The non-canonical mTORC1 complex, which acts independently of RHEB, specifically mediates phosphorylation of MiT/TFE factors MITF, TFEB and TFE3 in the presence of nutrients, promoting their cytosolic retention and inactivation. Upon starvation or lysosomal stress, inhibition of mTORC1 induces dephosphorylation and nuclear translocation of TFEB and TFE3, promoting their transcription factor activity. The mTORC1 complex regulates pyroptosis in macrophages by promoting GSDMD oligomerization. MTOR phosphorylates RPTOR which in turn inhibits mTORC1. As part of the mTORC2 complex, MTOR transduces signals from growth factors to pathways involved in proliferation, cytoskeletal organization, lipogenesis and anabolic output. In response to growth factors, mTORC2 phosphorylates and activates AGC protein kinase family members, including AKT (AKT1, AKT2 and AKT3), PKC (PRKCA, PRKCB and PRKCE) and SGK1. In contrast to mTORC1, mTORC2 is nutrient-insensitive. mTORC2 plays a critical role in AKT1 activation by mediating phosphorylation of different sites depending on the context, such as 'Thr-450', 'Ser-473', 'Ser-477' or 'Thr-479', facilitating the phosphorylation of the activation loop of AKT1 on 'Thr-308' by PDPK1/PDK1 which is a prerequisite for full activation. mTORC2 also regulates the phosphorylation of SGK1 at 'Ser-422'. mTORC2 may regulate the actin cytoskeleton, through phosphorylation of PRKCA, PXN and activation of the Rho-type guanine nucleotide exchange factors RHOA and RAC1A or RAC1B. The mTORC2 complex also phosphorylates various proteins involved in insulin signaling, such as FBXW8 and IGF2BP1. May also regulate insulin signaling by acting as a tyrosine protein kinase that catalyzes phosphorylation of IGF1R and INSR; additional evidence are however required to confirm this result in vivo. Regulates osteoclastogenesis by adjusting the expression of CEBPB isoforms. Plays an important regulatory role in the circadian clock function; regulates period length and rhythm amplitude of the suprachiasmatic nucleus (SCN) and liver clocks. The sequence is that of Serine/threonine-protein kinase mTOR from Homo sapiens (Human).